A 98-amino-acid chain; its full sequence is NADH-ubiquinone oxidoreductase chain 4L (98 aa).

Helical transmembrane passes span 2–22 (LSIS…MLMF), 29–49 (SLLC…LIIL), and 61–81 (ILLL…LVMV).

The protein belongs to the complex I subunit 4L family. Core subunit of respiratory chain NADH dehydrogenase (Complex I) which is composed of 45 different subunits.

The protein localises to the mitochondrion inner membrane. It catalyses the reaction a ubiquinone + NADH + 5 H(+)(in) = a ubiquinol + NAD(+) + 4 H(+)(out). Its function is as follows. Core subunit of the mitochondrial membrane respiratory chain NADH dehydrogenase (Complex I) which catalyzes electron transfer from NADH through the respiratory chain, using ubiquinone as an electron acceptor. Part of the enzyme membrane arm which is embedded in the lipid bilayer and involved in proton translocation. In Microcebus ravelobensis (Golden-brown mouse lemur), this protein is NADH-ubiquinone oxidoreductase chain 4L (MT-ND4L).